Here is a 725-residue protein sequence, read N- to C-terminus: N-alpha-acetyltransferase 35, NatC auxiliary subunit (725 aa).

The interval 548–573 is disordered; it reads ERIMEEQQKGRSSKKTKKKKKVRPLS. Residues 558–571 are compositionally biased toward basic residues; the sequence is RSSKKTKKKKKVRP.

It belongs to the MAK10 family. In terms of assembly, component of the N-terminal acetyltransferase C (NatC) complex.

It localises to the cytoplasm. Its function is as follows. Auxillary component of the N-terminal acetyltransferase C (NatC) complex which catalyzes acetylation of N-terminal methionine residues. N-terminal acetylation protects proteins from ubiquitination and degradation by the N-end rule pathway. The sequence is that of N-alpha-acetyltransferase 35, NatC auxiliary subunit (NAA35) from Gallus gallus (Chicken).